The primary structure comprises 432 residues: Myb family transcription factor EFM (432 aa).

A coiled-coil region spans residues 36–81; sequence LEDLLSRLEQERLKIDAFKRELPLCMQLLNNAVEVYKQQLEAYRAN. Composition is skewed to polar residues over residues 123-139 and 187-197; these read SQSETKPKNIDSTTDQS and SPTNEHTNGQD. The interval 123–237 is disordered; sequence SQSETKPKNI…SQSNRKARRC (115 aa). Positions 201–231 are enriched in low complexity; it reads ESMINNDNNYNNNNNNNSNSNGVSSTTSQSN. One can recognise an HTH myb-type domain in the interval 230–290; that stretch reads SNRKARRCWS…HLQKYRLHTR (61 aa). Residues 261 to 286 constitute a DNA-binding region (H-T-H motif); it reads PKQIRELMKVDGLTNDEVKSHLQKYR. Residues 354 to 412 are disordered; sequence FYTTPPPPQPLHHHHFQTFNGSSGGTASTDSTHHQVTDSPTVEGKSPESGGGERKGLAA.

As to quaternary structure, interacts with JMJ30, but not with SVP, FLC or CO. Specifically expressed in vascular tissues of cotyledons, rosette leaves and cauline leaves. Not detected in the vegetative shoot apical meristem.

It is found in the nucleus. Functionally, transcription factor acting as a flowering repressor, directly repressing FT expression in a dosage-dependent manner in the leaf vasculature. The sequence is that of Myb family transcription factor EFM from Arabidopsis thaliana (Mouse-ear cress).